The following is a 99-amino-acid chain: Carboxysome shell vertex protein CcmL (99 aa).

Positions 1–83 (MRIAKVRGTV…VDAAVIAIID (83 aa)) constitute a BMV domain.

Belongs to the CcmL/EutN family. CcmL subfamily. In terms of assembly, homopentamer. Interacts with full-length CcmM.

Its subcellular location is the carboxysome. Probably forms vertices in the carboxysome, a polyhedral inclusion where RuBisCO (ribulose bisphosphate carboxylase, rbcL-rbcS) is sequestered. Has been modeled to induce curvature upon insertion into an otherwise flat hexagonal molecular layer of CcmK subunits. Its function is as follows. Beta-carboxysome assembly initiates when soluble RuBisCO is condensed into a liquid matrix in a pre-carboxysome by the RbcS-like domains of probably both CcmM58 and CcmM35. CcmN interacts with the N-terminus of CcmM58, and then recruits the CcmK2 major shell protein via CcmN's encapsulation peptide. Shell formation requires CcmK proteins and CcmO. CcmL caps the otherwise elongated carboxysome. Once fully encapsulated carboxysomes are formed, they migrate within the cell probably via interactions with the cytoskeleton. The chain is Carboxysome shell vertex protein CcmL from Synechococcus elongatus (strain ATCC 33912 / PCC 7942 / FACHB-805) (Anacystis nidulans R2).